The following is a 276-amino-acid chain: 2,3,4,5-tetrahydropyridine-2,6-dicarboxylate N-succinyltransferase (276 aa).

Substrate-binding residues include R100 and D137.

This sequence belongs to the transferase hexapeptide repeat family. In terms of assembly, homotrimer.

It localises to the cytoplasm. The enzyme catalyses (S)-2,3,4,5-tetrahydrodipicolinate + succinyl-CoA + H2O = (S)-2-succinylamino-6-oxoheptanedioate + CoA. Its pathway is amino-acid biosynthesis; L-lysine biosynthesis via DAP pathway; LL-2,6-diaminopimelate from (S)-tetrahydrodipicolinate (succinylase route): step 1/3. The polypeptide is 2,3,4,5-tetrahydropyridine-2,6-dicarboxylate N-succinyltransferase (Zymomonas mobilis subsp. mobilis (strain ATCC 31821 / ZM4 / CP4)).